A 276-amino-acid chain; its full sequence is METRYTHSPADIRHYSTEQLRDEFLVEKVFIPGAISLTYTHNDRMIFGGVTPTTEELEIILDKELGVDYFLERRELGVINIGGPGFIEIDGAKETMKKQDGYYIGKETKHVRFSSENPDNPAKFYISCVPAHHKYPNVKISIDEITPMETGDPLTLNQRKIYQYIHPNVCESCQLQMGYTILEPGSAWNTMPCHTHERRMEAYVYFDMEEDTRIFHMMGKPDETKHLVMSNEQAAISPSWSIHSGVGTSNYSFIWAMCGENITYTDMDMVAMDQLK.

Zn(2+) contacts are provided by histidine 194, histidine 196, glutamate 201, and histidine 243.

This sequence belongs to the KduI family. It depends on Zn(2+) as a cofactor.

The enzyme catalyses 5-dehydro-4-deoxy-D-glucuronate = 3-deoxy-D-glycero-2,5-hexodiulosonate. Its pathway is glycan metabolism; pectin degradation; 2-dehydro-3-deoxy-D-gluconate from pectin: step 4/5. Its function is as follows. Catalyzes the isomerization of 5-dehydro-4-deoxy-D-glucuronate to 3-deoxy-D-glycero-2,5-hexodiulosonate. This is 4-deoxy-L-threo-5-hexosulose-uronate ketol-isomerase 1 (kduI1) from Enterococcus faecalis (strain ATCC 700802 / V583).